Reading from the N-terminus, the 165-residue chain is Small ribosomal subunit protein uS5 (165 aa).

An S5 DRBM domain is found at 10 to 73; the sequence is LVEKLVSVDR…EAAKRNMITV (64 aa).

This sequence belongs to the universal ribosomal protein uS5 family. In terms of assembly, part of the 30S ribosomal subunit. Contacts proteins S4 and S8.

Functionally, with S4 and S12 plays an important role in translational accuracy. In terms of biological role, located at the back of the 30S subunit body where it stabilizes the conformation of the head with respect to the body. The chain is Small ribosomal subunit protein uS5 from Psychrobacter sp. (strain PRwf-1).